The sequence spans 584 residues: Aspartate--tRNA ligase (584 aa).

Glu-169 contacts L-aspartate. Residues 193–196 (QLFK) form an aspartate region. Arg-215 is a binding site for L-aspartate. Residues 215 to 217 (RDE) and Gln-224 contribute to the ATP site. Residue His-446 coordinates L-aspartate. Residue Glu-480 participates in ATP binding. Arg-487 is an L-aspartate binding site. An ATP-binding site is contributed by 532 to 535 (GLDR).

Belongs to the class-II aminoacyl-tRNA synthetase family. Type 1 subfamily. In terms of assembly, homodimer.

The protein resides in the cytoplasm. It catalyses the reaction tRNA(Asp) + L-aspartate + ATP = L-aspartyl-tRNA(Asp) + AMP + diphosphate. Functionally, catalyzes the attachment of L-aspartate to tRNA(Asp) in a two-step reaction: L-aspartate is first activated by ATP to form Asp-AMP and then transferred to the acceptor end of tRNA(Asp). The chain is Aspartate--tRNA ligase from Buchnera aphidicola subsp. Schizaphis graminum (strain Sg).